The sequence spans 178 residues: ATP synthase subunit delta (178 aa).

This sequence belongs to the ATPase delta chain family. F-type ATPases have 2 components, F(1) - the catalytic core - and F(0) - the membrane proton channel. F(1) has five subunits: alpha(3), beta(3), gamma(1), delta(1), epsilon(1). F(0) has three main subunits: a(1), b(2) and c(10-14). The alpha and beta chains form an alternating ring which encloses part of the gamma chain. F(1) is attached to F(0) by a central stalk formed by the gamma and epsilon chains, while a peripheral stalk is formed by the delta and b chains.

It localises to the cell membrane. Functionally, f(1)F(0) ATP synthase produces ATP from ADP in the presence of a proton or sodium gradient. F-type ATPases consist of two structural domains, F(1) containing the extramembraneous catalytic core and F(0) containing the membrane proton channel, linked together by a central stalk and a peripheral stalk. During catalysis, ATP synthesis in the catalytic domain of F(1) is coupled via a rotary mechanism of the central stalk subunits to proton translocation. Its function is as follows. This protein is part of the stalk that links CF(0) to CF(1). It either transmits conformational changes from CF(0) to CF(1) or is implicated in proton conduction. The polypeptide is ATP synthase subunit delta (Streptococcus sanguinis (strain SK36)).